Reading from the N-terminus, the 640-residue chain is Endoglucanase 1 (640 aa).

The signal sequence occupies residues methionine 1–alanine 24. The active-site Nucleophile is aspartate 94. Active-site residues include histidine 433, aspartate 485, and glutamate 494. N-linked (GlcNAc...) asparagine glycosylation is found at asparagine 528 and asparagine 548.

The protein belongs to the glycosyl hydrolase 9 (cellulase E) family. Expressed in roots, leaf sheaths and flowers.

Its subcellular location is the secreted. It catalyses the reaction Endohydrolysis of (1-&gt;4)-beta-D-glucosidic linkages in cellulose, lichenin and cereal beta-D-glucans.. The protein is Endoglucanase 1 (GLU7) of Oryza sativa subsp. japonica (Rice).